A 543-amino-acid polypeptide reads, in one-letter code: Bifunctional riboflavin biosynthesis protein RIBA 1, chloroplastic (543 aa).

The transit peptide at 1–56 (MSSINLSSSSPSTISLSRSRLSQSSTTLLHGLHRVTLPSNHPLSTFSIKTNTGKVK) directs the protein to the chloroplast. The segment at 57 to 328 (AAVISREDDL…IADLIRYRRK (272 aa)) is DHBP synthase. D-ribulose 5-phosphate contacts are provided by residues 152 to 153 (RE), Asp157, 267 to 271 (RAGHT), and Glu291. Residue Glu153 coordinates Mg(2+). His270 contacts Mg(2+). The interval 329-543 (RDKLVERASA…VEKIESESES (215 aa)) is GTP cyclohydrolase II. A GTP-binding site is contributed by 379–383 (RVHSE). Zn(2+)-binding residues include Cys384, Cys395, and Cys397. GTP contacts are provided by residues Gln400, 423–425 (EGR), and Thr445. The active-site Proton acceptor; for GTP cyclohydrolase activity is the Asp457. Arg459 serves as the catalytic Nucleophile; for GTP cyclohydrolase activity. Residues Thr480 and Lys485 each contribute to the GTP site.

This sequence in the N-terminal section; belongs to the DHBP synthase family. The protein in the C-terminal section; belongs to the GTP cyclohydrolase II family. Mg(2+) is required as a cofactor. Requires Mn(2+) as cofactor. Zn(2+) serves as cofactor. Expressed in leaves, shoots, roots, flowers and siliques.

It localises to the plastid. Its subcellular location is the chloroplast. The enzyme catalyses D-ribulose 5-phosphate = (2S)-2-hydroxy-3-oxobutyl phosphate + formate + H(+). The catalysed reaction is GTP + 4 H2O = 2,5-diamino-6-hydroxy-4-(5-phosphoribosylamino)-pyrimidine + formate + 2 phosphate + 3 H(+). It functions in the pathway cofactor biosynthesis; riboflavin biosynthesis; 2-hydroxy-3-oxobutyl phosphate from D-ribulose 5-phosphate: step 1/1. Its pathway is cofactor biosynthesis; riboflavin biosynthesis; 5-amino-6-(D-ribitylamino)uracil from GTP: step 1/4. In terms of biological role, involved in riboflavin biosynthesis. Catalyzes both the conversion of D-ribulose 5-phosphate to formate and 3,4-dihydroxy-2-butanone 4-phosphate and the conversion of GTP to 2,5-diamino-6-ribosylamino-4(3H)-pyrimidinone 5'-phosphate (DARP), formate and pyrophosphate. RIBA2 and RIBA3 together are not able to complement the loss of function of RIBA1. The chain is Bifunctional riboflavin biosynthesis protein RIBA 1, chloroplastic (RIBA1) from Arabidopsis thaliana (Mouse-ear cress).